The primary structure comprises 384 residues: F-box only protein 5 (384 aa).

The segment at 25–67 (EVKGHKVSPRKTGALSLRSPAATNVSTPLESRSKGPHNKENYQ) is disordered. Positions 45–54 (AATNVSTPLE) are enriched in polar residues. A compositionally biased stretch (basic and acidic residues) spans 55–67 (SRSKGPHNKENYQ). One can recognise an F-box domain in the interval 187–234 (CKLMRKDMRHILARILGLLGDCDLISCTKVSRTWRKIICQDQLALQRW). The segment at 311 to 359 (SLRRCSRCSSPARFDAVMQRAVCTRISCAFEFCTLCQSAFHDSTPCRNT) adopts a ZBR-type zinc-finger fold. 8 residues coordinate Zn(2+): C315, C318, C333, C338, C343, C346, H351, and C356.

As to quaternary structure, part of a SCF (SKP1-cullin-F-box) protein ligase complex.

It localises to the nucleus. It is found in the cytoplasm. It participates in protein modification; protein ubiquitination. In terms of biological role, during embryonic development, regulates the integrity of the genome and therefore the cell cycle progression by preventing rereplication through an APC-Cdh1-dependent mechanism. This is F-box only protein 5 from Danio rerio (Zebrafish).